Reading from the N-terminus, the 302-residue chain is MSHPHSNAVKSFLLDLQDRICAALEQADGKAQFAEDAWSREAGGGGRSRVLTGGEVFEQAGVNFSHVHGDALPPSASAHRPELAGRRFEAMGVSLVIHPSNPHVPTSHANVRFFIAEKDGEAPVWWFGGGFDLTPFYPQEEDAVHWHTVARDLCAPFGGDVYPRYKKWCDEYFHLKHRNEARGIGGLFFDDLNEWGFDKSFAFTRAVGDGYLDAYLPIVARRKEQAWGDRERQFQLYRRGRYVEFNLVWDRGTLFGLQSGGRTESILMSMPPLVRWEYGYQPEPGSPEARLYTDFLPPRDWV.

Ser-94 is a substrate binding site. Residues His-98 and His-108 each contribute to the a divalent metal cation site. The Proton donor role is filled by His-108. 110–112 lines the substrate pocket; that stretch reads NVR. Residues His-147 and His-177 each contribute to the a divalent metal cation site. The interval 242–277 is important for dimerization; the sequence is YVEFNLVWDRGTLFGLQSGGRTESILMSMPPLVRWE. 260–262 contributes to the substrate binding site; the sequence is GGR.

This sequence belongs to the aerobic coproporphyrinogen-III oxidase family. Homodimer. A divalent metal cation is required as a cofactor.

The protein resides in the cytoplasm. It carries out the reaction coproporphyrinogen III + O2 + 2 H(+) = protoporphyrinogen IX + 2 CO2 + 2 H2O. The protein operates within porphyrin-containing compound metabolism; protoporphyrin-IX biosynthesis; protoporphyrinogen-IX from coproporphyrinogen-III (O2 route): step 1/1. In terms of biological role, involved in the heme biosynthesis. Catalyzes the aerobic oxidative decarboxylation of propionate groups of rings A and B of coproporphyrinogen-III to yield the vinyl groups in protoporphyrinogen-IX. This is Oxygen-dependent coproporphyrinogen-III oxidase from Chromobacterium violaceum (strain ATCC 12472 / DSM 30191 / JCM 1249 / CCUG 213 / NBRC 12614 / NCIMB 9131 / NCTC 9757 / MK).